A 267-amino-acid polypeptide reads, in one-letter code: Tryptophan 2,3-dioxygenase (267 aa).

Substrate contacts are provided by residues 44–48 (FITIH) and Arg114. Position 225 (His225) interacts with heme. Thr239 is a binding site for substrate.

It belongs to the tryptophan 2,3-dioxygenase family. As to quaternary structure, homotetramer. Heme is required as a cofactor.

The enzyme catalyses L-tryptophan + O2 = N-formyl-L-kynurenine. Its pathway is amino-acid degradation; L-tryptophan degradation via kynurenine pathway; L-kynurenine from L-tryptophan: step 1/2. Its function is as follows. Heme-dependent dioxygenase that catalyzes the oxidative cleavage of the L-tryptophan (L-Trp) pyrrole ring and converts L-tryptophan to N-formyl-L-kynurenine. Catalyzes the oxidative cleavage of the indole moiety. The sequence is that of Tryptophan 2,3-dioxygenase from Nocardioides sp. (strain ATCC BAA-499 / JS614).